The following is a 500-amino-acid chain: NAD(P)H-quinone oxidoreductase chain 4, chloroplastic (500 aa).

14 helical membrane passes run 4 to 24 (FPWLTIIVVLPIFAGSLIFFL), 35 to 55 (YTICICMLELLLTTYAFCYHF), 87 to 107 (LGPVLLTGFITTLATLAAWPV), 113 to 130 (LFHFLMLAMYSGQIGSFS), 134 to 154 (LLLFFIMWELELIPVYLLLSM), 167 to 187 (FILYTAGGSIFLLMGVLGVGL), 207 to 227 (VALEIIFYIGFLIAFAVKLPI), 242 to 262 (HYSTCMLLAGILLKMGAYGLI), 272 to 292 (AHSIFSPWLMVVGTIQIIYAA), 305 to 325 (IAYSSVSHMGFILIGIASITD), 330 to 350 (GAILQIISHGFIGAALFFLAG), 386 to 406 (LALPGMSGFVAEVLVFLGIIT), 416 to 436 (IAITFVMAIGMILTPIYLLSM), and 462 to 482 (LFVSISIFIPVIGIGMYPDFV).

This sequence belongs to the complex I subunit 4 family.

The protein localises to the plastid. It localises to the chloroplast thylakoid membrane. It catalyses the reaction a plastoquinone + NADH + (n+1) H(+)(in) = a plastoquinol + NAD(+) + n H(+)(out). The enzyme catalyses a plastoquinone + NADPH + (n+1) H(+)(in) = a plastoquinol + NADP(+) + n H(+)(out). The polypeptide is NAD(P)H-quinone oxidoreductase chain 4, chloroplastic (Helianthus annuus (Common sunflower)).